A 61-amino-acid chain; its full sequence is Metallothionein-1E (61 aa).

M1 is subject to N-acetylmethionine. Residues 1 to 29 (MDPNCSCATGGSCTCAGSCKCKECKCTSC) form a beta region. 20 residues coordinate a divalent metal cation: C5, C7, C13, C15, C19, C21, C24, C26, C29, C33, C34, C36, C37, C41, C44, C48, C50, C57, C59, and C60. The segment at 30 to 61 (KKSCCSCCPVGCAKCAQGCVCKGASEKCSCCA) is alpha.

The protein belongs to the metallothionein superfamily. Type 1 family. As to quaternary structure, monomer.

In terms of biological role, metallothioneins have a high content of cysteine residues that bind various heavy metals; these proteins are transcriptionally regulated by both heavy metals and glucocorticoids. This is Metallothionein-1E (MT1E) from Homo sapiens (Human).